We begin with the raw amino-acid sequence, 126 residues long: Large ribosomal subunit protein bL12 (126 aa).

This sequence belongs to the bacterial ribosomal protein bL12 family. As to quaternary structure, homodimer. Part of the ribosomal stalk of the 50S ribosomal subunit. Forms a multimeric L10(L12)X complex, where L10 forms an elongated spine to which 2 to 4 L12 dimers bind in a sequential fashion. Binds GTP-bound translation factors.

Functionally, forms part of the ribosomal stalk which helps the ribosome interact with GTP-bound translation factors. Is thus essential for accurate translation. The chain is Large ribosomal subunit protein bL12 from Methylobacterium nodulans (strain LMG 21967 / CNCM I-2342 / ORS 2060).